We begin with the raw amino-acid sequence, 287 residues long: Polyamine aminopropyltransferase (287 aa).

The PABS domain occupies 5-238; that stretch reads EIWYETLHAN…GIMTFAWASQ (234 aa). An S-methyl-5'-thioadenosine-binding site is contributed by Gln-33. His-64 and Asp-88 together coordinate spermidine. S-methyl-5'-thioadenosine is bound by residues Glu-108 and 140–141; that span reads DG. Asp-158 functions as the Proton acceptor in the catalytic mechanism. 158 to 161 serves as a coordination point for spermidine; sequence DCTD. An S-methyl-5'-thioadenosine-binding site is contributed by Pro-165.

Belongs to the spermidine/spermine synthase family. Homodimer or homotetramer.

The protein localises to the cytoplasm. The enzyme catalyses S-adenosyl 3-(methylsulfanyl)propylamine + putrescine = S-methyl-5'-thioadenosine + spermidine + H(+). Its pathway is amine and polyamine biosynthesis; spermidine biosynthesis; spermidine from putrescine: step 1/1. Its function is as follows. Catalyzes the irreversible transfer of a propylamine group from the amino donor S-adenosylmethioninamine (decarboxy-AdoMet) to putrescine (1,4-diaminobutane) to yield spermidine. This Serratia proteamaculans (strain 568) protein is Polyamine aminopropyltransferase.